We begin with the raw amino-acid sequence, 266 residues long: Prolactin-7A1 (266 aa).

An N-terminal signal peptide occupies residues 1-30 (MPLSFTQPCSSGALLLLVVSNLLLWENVAC). N-linked (GlcNAc...) asparagine glycans are attached at residues N36, N58, N110, N149, and N157. Disulfide bonds link C114–C231 and C248–C257.

The protein belongs to the somatotropin/prolactin family. As to expression, expressed specifically in the placenta. Detected only in the trophoblast giant cells.

The protein localises to the secreted. This is Prolactin-7A1 (Prl7a1) from Mus musculus (Mouse).